Here is a 533-residue protein sequence, read N- to C-terminus: Beta-apo-4'-carotenal oxygenase (533 aa).

Active-site residues include glutamate 226 and cysteine 260.

Belongs to the aldehyde dehydrogenase family.

It catalyses the reaction 4'-apo-beta-carotenal + NAD(+) + H2O = neurosporaxanthin + NADH + 2 H(+). Beta-apo-4'-carotenal oxygenase involved in the last step of synthesis of neurosporaxanthin, a carboxylic apocarotenoid acting as an essential protective pigment and leading to orange pigmentation. Converts the aldehyde beta-apo-4'-carotenal into neurosporaxanthin. Neurosporaxanthin is synthesized from geranyl-geranyl pyrophosphate (GGPP) through several enzymatic activities. Phytoene synthase activity performed by the bifunctional enzyme al-2 first produces phytoene from geranyl-geranyl pyrophosphate (GGPP). The phytoene dehydrogenase al-1 then introduces 5 desaturations to lead to 3,4-didehydrolycopene via the intermediates phytofluene, zeta-carotene, neurosporene and lycopene. Al-2 cyclase activity then converts 3,4-didehydrolycopene into torulene. Al-2 can also convet lycopene into gamma-carotene which in turn is converted to beta-carotene by an additional al-2 cyclization reaction. Torulene is the substrate of the dioxidase cao-2 that breaks the molecule, removing five carbon atoms to yield beta-apo-4'-carotenal, whereas the aldehyde dehydrogenase ylo-1 mediates the last step by converting beta-apo-4'-carotenal into neurosporaxanthin. The sequence is that of Beta-apo-4'-carotenal oxygenase from Neurospora crassa (strain ATCC 24698 / 74-OR23-1A / CBS 708.71 / DSM 1257 / FGSC 987).